The chain runs to 429 residues: 3-phosphoshikimate 1-carboxyvinyltransferase (429 aa).

Positions 11, 12, and 16 each coordinate 3-phosphoshikimate. Position 11 (K11) interacts with phosphoenolpyruvate. Phosphoenolpyruvate-binding residues include G82 and R110. The 3-phosphoshikimate site is built by S155, Q157, D302, and K329. Residue Q157 coordinates phosphoenolpyruvate. The active-site Proton acceptor is D302. 2 residues coordinate phosphoenolpyruvate: R333 and R385.

Belongs to the EPSP synthase family. In terms of assembly, monomer.

The protein resides in the cytoplasm. It carries out the reaction 3-phosphoshikimate + phosphoenolpyruvate = 5-O-(1-carboxyvinyl)-3-phosphoshikimate + phosphate. Its pathway is metabolic intermediate biosynthesis; chorismate biosynthesis; chorismate from D-erythrose 4-phosphate and phosphoenolpyruvate: step 6/7. In terms of biological role, catalyzes the transfer of the enolpyruvyl moiety of phosphoenolpyruvate (PEP) to the 5-hydroxyl of shikimate-3-phosphate (S3P) to produce enolpyruvyl shikimate-3-phosphate and inorganic phosphate. The polypeptide is 3-phosphoshikimate 1-carboxyvinyltransferase (Helicobacter pylori (strain ATCC 700392 / 26695) (Campylobacter pylori)).